A 292-amino-acid chain; its full sequence is S-methyl-5'-thioadenosine phosphorylase (292 aa).

Phosphate contacts are provided by residues Ser11, 53–54, and 86–87; these read RH and SA. Met184 is a binding site for substrate. Thr185 lines the phosphate pocket. Residue 208-210 participates in substrate binding; that stretch reads DYD.

This sequence belongs to the PNP/MTAP phosphorylase family. MTAP subfamily. Homohexamer. Dimer of a homotrimer.

The enzyme catalyses S-methyl-5'-thioadenosine + phosphate = 5-(methylsulfanyl)-alpha-D-ribose 1-phosphate + adenine. It functions in the pathway amino-acid biosynthesis; L-methionine biosynthesis via salvage pathway; S-methyl-5-thio-alpha-D-ribose 1-phosphate from S-methyl-5'-thioadenosine (phosphorylase route): step 1/1. Functionally, catalyzes the reversible phosphorylation of S-methyl-5'-thioadenosine (MTA) to adenine and 5-methylthioribose-1-phosphate. Involved in the breakdown of MTA, a major by-product of polyamine biosynthesis. Responsible for the first step in the methionine salvage pathway after MTA has been generated from S-adenosylmethionine. Has broad substrate specificity with 6-aminopurine nucleosides as preferred substrates. This is S-methyl-5'-thioadenosine phosphorylase from Koribacter versatilis (strain Ellin345).